The chain runs to 228 residues: Urease accessory protein UreE (228 aa).

The tract at residues 193–228 (HGSGLHIHGIHSHGDGHSHSHDDHDHDHNHDHDHKH) is disordered. Residues 204-228 (SHGDGHSHSHDDHDHDHNHDHDHKH) are compositionally biased toward basic and acidic residues.

It belongs to the UreE family.

The protein localises to the cytoplasm. Functionally, involved in urease metallocenter assembly. Binds nickel. Probably functions as a nickel donor during metallocenter assembly. In Yersinia rohdei, this protein is Urease accessory protein UreE.